We begin with the raw amino-acid sequence, 878 residues long: Outer membrane usher protein FimD (878 aa).

An N-terminal signal peptide occupies residues 1–45; that stretch reads MSYLNLRLYQRNTQCLHIRKHRLAGFFVRLVVACAFAAQAPLSSA. A disulfide bridge links Cys855 with Cys877.

This sequence belongs to the fimbrial export usher family.

It is found in the cell outer membrane. Functionally, involved in the export and assembly of FimA fimbrial subunits across the outer membrane. The chain is Outer membrane usher protein FimD (fimD) from Escherichia coli (strain K12).